Here is a 235-residue protein sequence, read N- to C-terminus: Myelin protein zero-like protein 3 (235 aa).

The first 31 residues, 1–31 (MQQRGAAGSRGCALFPLLGVLFFQGVYIVFS), serve as a signal peptide directing secretion. In terms of domain architecture, Ig-like V-type spans 32–148 (LEIRADAHVR…NIPMTELTVT (117 aa)). At 32–158 (LEIRADAHVR…ERGFGTMLSS (127 aa)) the chain is on the extracellular side. The cysteines at positions 52 and 128 are disulfide-linked. N-linked (GlcNAc...) asparagine glycosylation is present at asparagine 123. A helical membrane pass occupies residues 159–179 (VALLSILVFVPSAVVVALLLV). The Cytoplasmic segment spans residues 180–235 (RMGRKAAGLKKRSRSGYKKSSIEVSDDTDQEEEEACMARLCVRCAECLDSDYEETY).

Belongs to the myelin P0 protein family.

The protein resides in the membrane. Functionally, mediates homophilic cell-cell adhesion. The sequence is that of Myelin protein zero-like protein 3 (MPZL3) from Homo sapiens (Human).